The primary structure comprises 674 residues: UvrABC system protein B (674 aa).

Positions 26–183 (EGLEDGLAHQ…RRLAELQYTR (158 aa)) constitute a Helicase ATP-binding domain. 39 to 46 (GVTGSGKT) serves as a coordination point for ATP. Positions 92-115 (YYDYYQPEAYVPSSDTFIEKDASV) match the Beta-hairpin motif. The Helicase C-terminal domain occupies 431-597 (QVDDLLSEIR…GLNKKISDIL (167 aa)). The UVR domain maps to 634-669 (QKRIHQLEAQMQQHAQNLEFEEAAQVRDQLHQVREL).

The protein belongs to the UvrB family. Forms a heterotetramer with UvrA during the search for lesions. Interacts with UvrC in an incision complex.

It localises to the cytoplasm. In terms of biological role, the UvrABC repair system catalyzes the recognition and processing of DNA lesions. A damage recognition complex composed of 2 UvrA and 2 UvrB subunits scans DNA for abnormalities. Upon binding of the UvrA(2)B(2) complex to a putative damaged site, the DNA wraps around one UvrB monomer. DNA wrap is dependent on ATP binding by UvrB and probably causes local melting of the DNA helix, facilitating insertion of UvrB beta-hairpin between the DNA strands. Then UvrB probes one DNA strand for the presence of a lesion. If a lesion is found the UvrA subunits dissociate and the UvrB-DNA preincision complex is formed. This complex is subsequently bound by UvrC and the second UvrB is released. If no lesion is found, the DNA wraps around the other UvrB subunit that will check the other stand for damage. This Erwinia tasmaniensis (strain DSM 17950 / CFBP 7177 / CIP 109463 / NCPPB 4357 / Et1/99) protein is UvrABC system protein B.